We begin with the raw amino-acid sequence, 556 residues long: 2-succinyl-5-enolpyruvyl-6-hydroxy-3-cyclohexene-1-carboxylate synthase (556 aa).

The protein belongs to the TPP enzyme family. MenD subfamily. Homodimer. The cofactor is Mg(2+). Mn(2+) is required as a cofactor. It depends on thiamine diphosphate as a cofactor.

The enzyme catalyses isochorismate + 2-oxoglutarate + H(+) = 5-enolpyruvoyl-6-hydroxy-2-succinyl-cyclohex-3-ene-1-carboxylate + CO2. It participates in quinol/quinone metabolism; 1,4-dihydroxy-2-naphthoate biosynthesis; 1,4-dihydroxy-2-naphthoate from chorismate: step 2/7. Its pathway is quinol/quinone metabolism; menaquinone biosynthesis. Its function is as follows. Catalyzes the thiamine diphosphate-dependent decarboxylation of 2-oxoglutarate and the subsequent addition of the resulting succinic semialdehyde-thiamine pyrophosphate anion to isochorismate to yield 2-succinyl-5-enolpyruvyl-6-hydroxy-3-cyclohexene-1-carboxylate (SEPHCHC). The polypeptide is 2-succinyl-5-enolpyruvyl-6-hydroxy-3-cyclohexene-1-carboxylate synthase (Shigella boydii serotype 18 (strain CDC 3083-94 / BS512)).